The sequence spans 172 residues: ATP-dependent kinase-like protein notR' (172 aa).

The protein belongs to the YFH7 family.

Its function is as follows. ATP-dependent kinase-like protein; part of the gene cluster that mediates the biosynthesis of notoamide, a fungal indole alkaloid that belongs to a family of natural products containing a characteristic bicyclo[2.2.2]diazaoctane core. The first step of notoamide biosynthesis involves coupling of L-proline and L-tryptophan by the bimodular NRPS notE', to produce cyclo-L-tryptophan-L-proline called brevianamide F. The reverse prenyltransferase notF' then acts as a deoxybrevianamide E synthase and converts brevianamide F to deoxybrevianamide E via reverse prenylation at C-2 of the indole ring leading to the bicyclo[2.2.2]diazaoctane core. Deoxybrevianamide E is further hydroxylated at C-6 of the indole ring, likely catalyzed by the cytochrome P450 monooxygenase notG', to yield 6-hydroxy-deoxybrevianamide E. 6-hydroxy-deoxybrevianamide E is a specific substrate of the prenyltransferase notC' for normal prenylation at C-7 to produce 6-hydroxy-7-prenyl-deoxybrevianamide, also called notoamide S. As the proposed pivotal branching point in notoamide biosynthesis, notoamide S can be diverted to notoamide E through an oxidative pyran ring closure putatively catalyzed by either notH' cytochrome P450 monooxygenase or the notD' FAD-linked oxidoreductase. This step would be followed by an indole 2,3-epoxidation-initiated pinacol-like rearrangement catalyzed by the notB' FAD-dependent monooxygenase leading to the formation of notoamide C and notoamide D. On the other hand notoamide S is converted to notoamide T by notH' (or notD'), a bifunctional oxidase that also functions as the intramolecular Diels-Alderase responsible for generation of (-)-notoamide T. To generate antipodal (+)-notoaminide T, notH (or notD) in Aspergillus strain MF297-2 is expected to catalyze a Diels-Alder reaction leading to the opposite stereochemistry. The remaining oxidoreductase notD' (or notH') likely catalyzes the oxidative pyran ring formation to yield (-)-stephacidin A. The FAD-dependent monooxygenase notI' is highly similar to notB' and is predicted to catalyze a similar conversion from (-)-stephacidin A to (+)-notoamide B via the 2,3-epoxidation of (-)-stephacidin A followed by a pinacol-type rearrangement. Finally, it remains unclear which enzyme could be responsible for the final hydroxylation steps leading to notoamide A and sclerotiamide. The function of notQ' in the notoamide biosynthesis has not been determined yet. The polypeptide is ATP-dependent kinase-like protein notR' (Aspergillus versicolor).